The sequence spans 308 residues: Taste receptor type 2 member 43 (308 aa).

Residue Met1 is a topological domain, extracellular. Residues 2 to 22 (ITFLPIIFSILVVVTFVIGNC) traverse the membrane as a helical segment. Residues 23 to 46 (ANGFIALVNSTEWVKRQKISFADQ) are Cytoplasmic-facing. The chain crosses the membrane as a helical span at residues 47–67 (ILTALAVSRVGLLWVLLLNWY). The Extracellular segment spans residues 68-86 (ATVLNPAFYSVEVRTIVYN). The chain crosses the membrane as a helical span at residues 87-107 (LWAVINHFSNWLATSLSIFYL). At 108–126 (LKIANFSNLIFLHLKRRVK) the chain is on the cytoplasmic side. A helical membrane pass occupies residues 127–147 (SVVLVILLGPLLFLVCHLFVV). At 148 to 178 (NMNEIVRTKEYEGNMTWKSKLRSAMYLSNTT) the chain is on the extracellular side. N-linked (GlcNAc...) asparagine glycosylation is found at Asn161 and Asn176. A helical membrane pass occupies residues 179-199 (VTILANLVPFILTLISFLLLI). Residues 200-229 (CSLCKHLKKMQLRDKGSQDPSTKVHIKALQ) lie on the Cytoplasmic side of the membrane. The chain crosses the membrane as a helical span at residues 230–249 (TVISLLLCVIYFLSIMISSW). The Extracellular portion of the chain corresponds to 250-258 (SLGRVENKA). The chain crosses the membrane as a helical span at residues 259–279 (VFMFCKAIRFSYPSAHAFILI). Residues 280-308 (WGNKKLKQTLLSVLWNVRYCVKGQKLPSP) are Cytoplasmic-facing.

Belongs to the G-protein coupled receptor T2R family.

Its subcellular location is the membrane. It localises to the cell projection. The protein resides in the cilium membrane. Functionally, gustducin-coupled receptor immplicated in the perception of bitter compounds in the oral cavity and the gastrointestinal tract. Signals through PLCB2 and the calcium-regulated cation channel TRPM5. Activated by the sulfonyl amide sweeteners saccharin and acesulfame K. In airway epithelial cells, binding of bitter compounds increases the intracellular calcium ion concentration and stimulates ciliary beat frequency. May act as chemosensory receptors in airway epithelial cells to detect and eliminate potential noxious agents from the airways. The chain is Taste receptor type 2 member 43 (TAS2R43) from Papio hamadryas (Hamadryas baboon).